A 221-amino-acid chain; its full sequence is 3-phospho-D-glycerate guanylyltransferase (221 aa).

This sequence belongs to the CofC family.

The enzyme catalyses (2R)-3-phosphoglycerate + GTP + H(+) = 3-[(R)-glyceryl]-diphospho-5'-guanosine + diphosphate. It carries out the reaction (2S)-2-phospholactate + GTP + H(+) = (2S)-lactyl-2-diphospho-5'-guanosine + diphosphate. Its pathway is cofactor biosynthesis; coenzyme F420 biosynthesis. Guanylyltransferase that catalyzes the activation of (2R)-3-phosphoglycerate (3PG) as 3-[(R)-glyceryl]-diphospho-5'-guanosine, via the condensation of 3PG with GTP. It is involved in the biosynthesis of a derivative of the hydride carrier cofactor coenzyme F420, 3PG-F420. Can also use (2S)-2-phospholactate (2-PL), with lower turnover, and has weak activity with phosphoenolpyruvate (PEP). In Mycetohabitans rhizoxinica (strain DSM 19002 / CIP 109453 / HKI 454) (Paraburkholderia rhizoxinica), this protein is 3-phospho-D-glycerate guanylyltransferase.